The following is an 899-amino-acid chain: DNA mismatch repair protein MutS (899 aa).

Residues 1 to 20 form a disordered region; the sequence is MGLQKKTDPEQAQADSAASR. ATP is bound at residue 631–638; the sequence is GPNMGGKS. The disordered stretch occupies residues 832–852; that stretch reads PPTPDDDEDDFGAAPSAVPAP. Low complexity predominate over residues 843-852; it reads GAAPSAVPAP.

The protein belongs to the DNA mismatch repair MutS family.

In terms of biological role, this protein is involved in the repair of mismatches in DNA. It is possible that it carries out the mismatch recognition step. This protein has a weak ATPase activity. The polypeptide is DNA mismatch repair protein MutS (Cupriavidus necator (strain ATCC 17699 / DSM 428 / KCTC 22496 / NCIMB 10442 / H16 / Stanier 337) (Ralstonia eutropha)).